The primary structure comprises 712 residues: Lactoperoxidase (712 aa).

Positions 1-22 (MWVCLQLPVFLASVTLFEVAAS) are cleaved as a signal peptide. Residues 23 to 100 (DTIAQAASTT…WEESFKRLRR (78 aa)) constitute a propeptide that is removed on maturation. The N-linked (GlcNAc...) (complex) asparagine; alternate glycan is linked to N106. Residue N106 is glycosylated (N-linked (GlcNAc...) (hybrid) asparagine; alternate). 4 disulfides stabilise this stretch: C123-C284, C132-C145, C246-C256, and C250-C274. N212 carries N-linked (GlcNAc...) (complex) asparagine; alternate glycosylation. N212 carries an N-linked (GlcNAc...) (high mannose) asparagine; alternate glycan. D225 contributes to the heme b binding site. H226 acts as the Proton acceptor in catalysis. Residue D227 participates in Ca(2+) binding. Ca(2+)-binding residues include T301, F303, D305, and S307. Phosphoserine is present on S315. N-linked (GlcNAc...) (high mannose) asparagine glycosylation occurs at N322. The cysteines at positions 354 and 365 are disulfide-linked. N358 carries an N-linked (GlcNAc...) asparagine glycan. E375 serves as a coordination point for heme b. N449 carries an N-linked (GlcNAc...) (complex) asparagine; alternate glycan. N449 carries an N-linked (GlcNAc...) (hybrid) asparagine; alternate glycan. N-linked (GlcNAc...) (high mannose) asparagine; alternate glycosylation occurs at N449. Position 468 (H468) interacts with heme b. Residue Y482 is modified to 3'-nitrotyrosine. 2 cysteine pairs are disulfide-bonded: C573–C630 and C671–C696.

The protein belongs to the peroxidase family. XPO subfamily. It depends on Ca(2+) as a cofactor. Heme b is required as a cofactor. In terms of tissue distribution, mammary gland; milk.

The protein resides in the secreted. It localises to the cytoplasm. It catalyses the reaction 2 a phenolic donor + H2O2 = 2 a phenolic radical donor + 2 H2O. The enzyme catalyses thiocyanate + H2O2 + H(+) = hypothiocyanous acid + H2O. The catalysed reaction is iodide + H2O2 = hypoiodite + H2O. In terms of biological role, heme-containing oxidoreductase which catalyzes the conversion of thiocyanate (SCN(-)) into antimicrobial agent hypothiocyanous acid (OSCN(-)) in the presence of hydrogen peroxide (H2O2). Also involved in the conversion of iodide (I(-)) into hypoiodite (IO(-)) in the presence of H2O2. Responsible for the inactivation of a wide range of micro-organisms and hence, important component of defense mechanism. Shows antibacterial properties against E.coli, K.pneumoniae, P.aeruginosa, S.sonnei, S.saphrophyticus, S.epidermidis and S.dysenteriae. May protect the udder from infection and may promote growth in newborns. May be implicated in airway host defense against infection. May contribute to maintaining an appropriate H2O2 cellular level, therefore protecting cells from H2O2-caused injuries and inflammation. This is Lactoperoxidase from Bubalus bubalis (Domestic water buffalo).